Consider the following 360-residue polypeptide: Phosphoserine aminotransferase (360 aa).

Residue Arg-42 coordinates L-glutamate. Residues 76–77, Trp-102, Thr-152, Asp-172, and Gln-195 each bind pyridoxal 5'-phosphate; that span reads AS. Lys-196 is modified (N6-(pyridoxal phosphate)lysine). 237-238 contributes to the pyridoxal 5'-phosphate binding site; sequence NT.

Belongs to the class-V pyridoxal-phosphate-dependent aminotransferase family. SerC subfamily. As to quaternary structure, homodimer. It depends on pyridoxal 5'-phosphate as a cofactor.

Its subcellular location is the cytoplasm. The catalysed reaction is O-phospho-L-serine + 2-oxoglutarate = 3-phosphooxypyruvate + L-glutamate. It carries out the reaction 4-(phosphooxy)-L-threonine + 2-oxoglutarate = (R)-3-hydroxy-2-oxo-4-phosphooxybutanoate + L-glutamate. The protein operates within amino-acid biosynthesis; L-serine biosynthesis; L-serine from 3-phospho-D-glycerate: step 2/3. Its function is as follows. Catalyzes the reversible conversion of 3-phosphohydroxypyruvate to phosphoserine and of 3-hydroxy-2-oxo-4-phosphonooxybutanoate to phosphohydroxythreonine. This chain is Phosphoserine aminotransferase, found in Bacillus cereus (strain ZK / E33L).